A 186-amino-acid polypeptide reads, in one-letter code: Serine hydrolase RBBP9 (186 aa).

The segment at 56-70 is retinoblastoma protein binding; sequence LPFMETELHCDEKTI. Positions 63–67 are involved in binding to RB1; that stretch reads LHCDE. Catalysis depends on charge relay system residues Ser75, Asp138, and His165.

It belongs to the RBBP9 family. As to quaternary structure, interacts with RB1; the interaction disrupts RB1 binding to E2F1. Interacts with RBL1 and RBL2. As to expression, expressed in spleen.

It carries out the reaction valacyclovir + H2O = acyclovir + L-valine + H(+). Functionally, serine hydrolase. Catalyzes the hydrolytic activation of amino acid ester of the antiviral prodrug valacyclovir to its corresponding active drug, acyclovir. May negatively regulate basal or autocrine TGF-beta signaling by suppressing SMAD2-SMAD3 phosphorylation. May play a role in the transformation process due to its capacity to confer resistance to the growth-inhibitory effects of TGF-beta through interaction with RB1 and the subsequent displacement of E2F1. In Mus musculus (Mouse), this protein is Serine hydrolase RBBP9 (Rbbp9).